The following is a 168-amino-acid chain: Photosystem I assembly protein Ycf3 (168 aa).

TPR repeat units lie at residues 35–68 (AFTYYRDGMSAQSEGNYAEALQNYYEATRPEIDP), 72–105 (SYILYNIGLIHTSNGEHTKALEYYFRALERNPFL), and 120–153 (GEQAIRQGDSEIAETWSDQAAEYWKQAIALTPGN).

The protein belongs to the Ycf3 family.

Its subcellular location is the plastid. It localises to the chloroplast thylakoid membrane. Functionally, essential for the assembly of the photosystem I (PSI) complex. May act as a chaperone-like factor to guide the assembly of the PSI subunits. This Amborella trichopoda protein is Photosystem I assembly protein Ycf3.